Reading from the N-terminus, the 394-residue chain is Potassium channel subfamily K member 18 (394 aa).

Topologically, residues methionine 1–leucine 31 are cytoplasmic. Residues leucine 32 to phenylalanine 52 form a helical membrane-spanning segment. The N-linked (GlcNAc...) asparagine glycan is linked to asparagine 83. The segment at residues phenylalanine 114–glycine 140 is an intramembrane region (pore-forming). Residues threonine 127, valine 128, glycine 129, and tyrosine 130 each coordinate K(+). Residues threonine 127 to histidine 132 are selectivity filter 1. Residues phenylalanine 142–isoleucine 162 form a helical membrane-spanning segment. Residues glycine 163–aspartate 292 are Cytoplasmic-facing. Residues proline 210–aspartate 215 are interaction with calcineurin. The segment at arginine 261–proline 266 is interaction with YWHAH. Residues serine 264 and serine 276 each carry the phosphoserine modification. The chain crosses the membrane as a helical span at residues isoleucine 293–leucine 313. Residues phenylalanine 326 to aspartate 340 constitute an intramembrane region (pore-forming). A selectivity filter 2 region spans residues threonine 335–aspartate 340. Residues histidine 347–phenylalanine 367 form a helical membrane-spanning segment. Over lysine 368–tryptophan 394 the chain is Cytoplasmic.

Belongs to the two pore domain potassium channel (TC 1.A.1.8) family. In terms of assembly, homodimer. Heterodimer with KCNK2. Heterodimer with KCNK10. Interacts with calcineurin. Interacts with YWHAH, in a phosphorylation-dependent manner. Phosphorylation of Ser-264 is required for the binding of 14-3-3eta/YWHAH. Calcineurin-mediated dephosphorylation of Ser-276 enhances channel activity. In terms of processing, N-glycosylated. Detected in brain cortex, cerebellum, dorsal root ganglion, spinal cord and testis. High expression in trigeminal ganglion (at protein level), also expressed in autonomic nervous system ganglia such as the stellate ganglion and paravertebral sympathetic ganglia. Expressed in all adult spinal cord and brain regions, with slightly higher expression in thalamus, hypothalamus, hippocampus and posterior corte (at protein level). In non-neuronal tissues, substantial expression found in lung and heart and weal expression in liver, testis, kidney, small intestine and spleen. Expressed in regulatory T cells (at protein level).

Its subcellular location is the cell membrane. It catalyses the reaction K(+)(in) = K(+)(out). Its activity is regulated as follows. Activated upon cell stimulation via Ca(2+)-mobilizing receptors, such as CHRM1/M1 muscarinic receptor and AGTR1/AT1a angiotensin receptor. Activated by volatile anesthetics, such as isoflurane and inhibited by local anesthetics such as bupivacaine and lidocaine. Inhibited by extracellular acidic pH. Inhibited by Zn(2+) ions. Inhibited by hydroxy-alpha-sanshool, an ingredient of Schezuan pepper. Inhibited by Ba(2+) ions. Its function is as follows. K(+) channel that conducts outward and inward rectifying currents at depolarized and hyperpolarized membrane potentials, respectively. The outward rectifying currents are voltage-dependent, coupled to K(+) electrochemical gradient across the membrane, whereas the inward currents can be induced in response to activation of Ca(2+)-mobilizing receptors. Homo- and heterodimerizes to form functional channels with distinct regulatory and gating properties. In trigeminal ganglia sensory neurons, the heterodimers of KCNK18/TRESK and KCNK2/TREK-1 or KCNK10/TREK-2 inhibit neuronal firing and neurogenic inflammation by stabilizing the resting membrane potential at K(+) equilibrium potential as well as by regulating the threshold of action potentials and the spike frequency. In thymocytes, conducts K(+) currents upon T cell receptor (TCR) signaling leading to sustained Ca(2+) influx and NF-kappa-B activation, FOXP3 transcription and positive selection of regulatory T cell (Treg) progenitor subsets. Appears to mediate the analgesics effects of hydroxy-alpha-sanshool, a metabolite naturally present in Schezuan pepper and other Xanthoxylum plants. The polypeptide is Potassium channel subfamily K member 18 (Mus musculus (Mouse)).